The following is a 665-amino-acid chain: MKKPFYITTPIYYPSGKLHIGSAYTTIACDVLARYKRLMGHEVFYLTGLDEHGQKIQTKAKEAGISPQTYVDNMAKDVKALWQLLDISYDTFIRTTDDYHEEVVAAVFEKLLAQDDIYLGEYSGWYSVSDEEFFTESQLKEVFRDEDGQVIGGIAPSGHEVEWVSEESYFLRLSKYADRLVAFFKERPDFIQPDGRMNEMVKNFIEPGLEDLAVSRTTFTWGVPVPSDPKHVVYVWIDALLNYATALGYGQANHANFDKFWNGTVFHMVGKDILRFHSIYWPILLMMLDLPMPDRLIAHGWFVMKDGKMSKSKGNVVYPEMLVERFGLDPLRYYLMRSLPVGSDGTFTPEDYVGRINYELANDLGNLLNRTVAMINKYFDGTVPAYVDNGTAFDADLSQLIDAQLADYHKHMEAVDYPRALEAVWTIIARTNKYIDETAPWVLAKEDGDKAQLASVMAHLAASLRVVAHVIQPFMMETSAAIMAQLGLAPVSDLSTLALADFPANTKVVAKGTPIFPRLDMEAEIDYIKAQMGDSSAISQEKEWVPEEVALKSEKDVITFETFDAVEIRVAEVKEVSKVEGSEKLLRFRVDAGDGQDRQILSGIAKFYPNEQELVGKKLQIVANLKPRKMVKKYISQGMILSAEHGDQLTVLTVDSSVPNGSIIG.

The 'HIGH' region signature appears at 12–22 (YYPSGKLHIGS). Positions 308–312 (KMSKS) match the 'KMSKS' region motif. An ATP-binding site is contributed by Lys311. The 104-residue stretch at 562 to 665 (TFDAVEIRVA…SSVPNGSIIG (104 aa)) folds into the tRNA-binding domain.

Belongs to the class-I aminoacyl-tRNA synthetase family. MetG type 2B subfamily. In terms of assembly, homodimer.

The protein resides in the cytoplasm. It carries out the reaction tRNA(Met) + L-methionine + ATP = L-methionyl-tRNA(Met) + AMP + diphosphate. In terms of biological role, is required not only for elongation of protein synthesis but also for the initiation of all mRNA translation through initiator tRNA(fMet) aminoacylation. This chain is Methionine--tRNA ligase (metG), found in Streptococcus pyogenes serotype M18 (strain MGAS8232).